The chain runs to 146 residues: Cytochrome c oxidase assembly factor 1 homolog (146 aa).

At 1–14 (MMWQKYAGSRRSMP) the chain is on the mitochondrial matrix side. Residues 15–37 (LGARILFHGVFYAGGFAIVYYLI) form a helical membrane-spanning segment. At 38 to 146 (QKFHSRALYY…GENGDEVKKE (109 aa)) the chain is on the mitochondrial intermembrane side.

The protein belongs to the COA1 family. As to quaternary structure, component of the MITRAC (mitochondrial translation regulation assembly intermediate of cytochrome c oxidase complex) complex, the core components of this complex being COA3/MITRAC12 and COX14. Interacts with COX17 and COA6. Part of the mitochondrial complex I assembly/MCIA complex that comprises at least the core subunits TMEM126B, NDUFAF1, ECSIT and ACAD9 and complement subunits such as COA1 and TMEM186.

Its subcellular location is the mitochondrion inner membrane. Its function is as follows. Component of the MITRAC (mitochondrial translation regulation assembly intermediate of cytochrome c oxidase complex) complex, that regulates cytochrome c oxidase assembly. MITRAC complexes regulate both translation of mitochondrial encoded components and assembly of nuclear-encoded components imported in mitochondrion. Required for assembly of mitochondrial respiratory chain complex I and complex IV. As part of the MCIA complex, required for efficient assembly of the mitochondrial complex I. The chain is Cytochrome c oxidase assembly factor 1 homolog from Homo sapiens (Human).